We begin with the raw amino-acid sequence, 266 residues long: Luciferase (266 aa).

Residues 22-41 form a helical membrane-spanning segment; it reads GLAAACCALAVASTIAFPYI.

The protein belongs to the fungal luciferase family.

It is found in the membrane. The catalysed reaction is 3-hydroxyhispidin + O2 = (E)-caffeoylpyruvate + hnu + CO2. It catalyses the reaction 3-hydroxyhispidin + O2 = 4-[(E)-2-(3,4-dihydroxyphenyl)ethenyl]-1,7-dihydroxy-2,3,5-trioxabicyclo[2.2.2]oct-7-en-6-one. Its function is as follows. Luciferase; part of the gene cluster that mediates the fungal bioluminescence cycle. Uses the fungal luciferin 3-hydroxyhispidin as a substrate to produce an endoperoxide as a high-energy intermediate with decomposition that yields oxyluciferin (also known as caffeoylpyruvate) and light emission. The fungal bioluminescence cycle begins with the hispidin synthetase that catalyzes the formation of hispidin which is further hydroxylated by the hispidin-3-hydroxylase, yielding the fungal luciferin 3-hydroxyhispidin. The luciferase then produces an endoperoxide as a high-energy intermediate with decomposition that yields oxyluciferin and light emission. Oxyluciferin can be recycled to caffeic acid by caffeoylpyruvate hydrolase. This is Luciferase from Armillaria gallica (Bulbous honey fungus).